We begin with the raw amino-acid sequence, 417 residues long: Serine--tRNA ligase (417 aa).

226–228 (TSE) is a binding site for L-serine. ATP contacts are provided by residues 257–259 (RRE) and V273. Residue E280 participates in L-serine binding. Residue 344 to 347 (EVTS) participates in ATP binding. Residue T379 participates in L-serine binding.

This sequence belongs to the class-II aminoacyl-tRNA synthetase family. Type-1 seryl-tRNA synthetase subfamily. As to quaternary structure, homodimer. The tRNA molecule binds across the dimer.

It localises to the cytoplasm. The enzyme catalyses tRNA(Ser) + L-serine + ATP = L-seryl-tRNA(Ser) + AMP + diphosphate + H(+). It catalyses the reaction tRNA(Sec) + L-serine + ATP = L-seryl-tRNA(Sec) + AMP + diphosphate + H(+). It participates in aminoacyl-tRNA biosynthesis; selenocysteinyl-tRNA(Sec) biosynthesis; L-seryl-tRNA(Sec) from L-serine and tRNA(Sec): step 1/1. Its function is as follows. Catalyzes the attachment of serine to tRNA(Ser). Is also able to aminoacylate tRNA(Sec) with serine, to form the misacylated tRNA L-seryl-tRNA(Sec), which will be further converted into selenocysteinyl-tRNA(Sec). The protein is Serine--tRNA ligase of Tropheryma whipplei (strain TW08/27) (Whipple's bacillus).